We begin with the raw amino-acid sequence, 21 residues long: Cupiennin-6d (21 aa).

Residue S21 is modified to Serine amide.

In terms of tissue distribution, expressed by the venom gland.

Its subcellular location is the secreted. The protein is Cupiennin-6d of Cupiennius salei (American wandering spider).